Reading from the N-terminus, the 297-residue chain is Bifunctional protein FolD (297 aa).

NADP(+) is bound by residues G168 to S170, T197, and V238.

The protein belongs to the tetrahydrofolate dehydrogenase/cyclohydrolase family. As to quaternary structure, homodimer.

The enzyme catalyses (6R)-5,10-methylene-5,6,7,8-tetrahydrofolate + NADP(+) = (6R)-5,10-methenyltetrahydrofolate + NADPH. It carries out the reaction (6R)-5,10-methenyltetrahydrofolate + H2O = (6R)-10-formyltetrahydrofolate + H(+). The protein operates within one-carbon metabolism; tetrahydrofolate interconversion. Functionally, catalyzes the oxidation of 5,10-methylenetetrahydrofolate to 5,10-methenyltetrahydrofolate and then the hydrolysis of 5,10-methenyltetrahydrofolate to 10-formyltetrahydrofolate. The chain is Bifunctional protein FolD from Lawsonia intracellularis (strain PHE/MN1-00).